Here is an 874-residue protein sequence, read N- to C-terminus: Alanine--tRNA ligase (874 aa).

Residues histidine 563, histidine 567, cysteine 664, and histidine 668 each contribute to the Zn(2+) site.

Belongs to the class-II aminoacyl-tRNA synthetase family. Requires Zn(2+) as cofactor.

It localises to the cytoplasm. It catalyses the reaction tRNA(Ala) + L-alanine + ATP = L-alanyl-tRNA(Ala) + AMP + diphosphate. In terms of biological role, catalyzes the attachment of alanine to tRNA(Ala) in a two-step reaction: alanine is first activated by ATP to form Ala-AMP and then transferred to the acceptor end of tRNA(Ala). Also edits incorrectly charged Ser-tRNA(Ala) and Gly-tRNA(Ala) via its editing domain. The chain is Alanine--tRNA ligase from Methylobacillus flagellatus (strain ATCC 51484 / DSM 6875 / VKM B-1610 / KT).